The chain runs to 449 residues: Tripartite motif-containing protein 64 (449 aa).

Residues 15-56 form an RING-type zinc finger; the sequence is CCICVNYFIDPVTIDCGHSFCRPCLCLCSEEGRAPMRCPSCR. A B box-type zinc finger spans residues 87–128; it reads SSDNICVLHEETKELFCEADKRLLCGPCSESPEHMAHSHSPI. Zn(2+)-binding residues include Cys92, His95, Cys114, and His120. Residues 189–225 are a coiled coil; sequence LDEEEQRHLQALEREAEELFQQLQDSQVRMTQHLERM. The 181-residue stretch at 269–449 folds into the B30.2/SPRY domain; the sequence is LTSWCITGVL…LRPFFCFGCT (181 aa).

This sequence belongs to the TRIM/RBCC family.

The protein is Tripartite motif-containing protein 64 (TRIM64) of Homo sapiens (Human).